A 685-amino-acid chain; its full sequence is Polyphosphate kinase (685 aa).

Asparagine 45 is an ATP binding site. Mg(2+) is bound by residues arginine 375 and arginine 405. The active-site Phosphohistidine intermediate is the histidine 435. Tyrosine 468, arginine 564, and histidine 592 together coordinate ATP.

The protein belongs to the polyphosphate kinase 1 (PPK1) family. Mg(2+) is required as a cofactor. Post-translationally, an intermediate of this reaction is the autophosphorylated ppk in which a phosphate is covalently linked to a histidine residue through a N-P bond.

It catalyses the reaction [phosphate](n) + ATP = [phosphate](n+1) + ADP. Its function is as follows. Catalyzes the reversible transfer of the terminal phosphate of ATP to form a long-chain polyphosphate (polyP). The protein is Polyphosphate kinase of Neisseria gonorrhoeae (strain ATCC 700825 / FA 1090).